The sequence spans 309 residues: 4-hydroxy-3-methylbut-2-enyl diphosphate reductase (309 aa).

Residue C12 coordinates [4Fe-4S] cluster. Residues H41 and H74 each contribute to the (2E)-4-hydroxy-3-methylbut-2-enyl diphosphate site. Dimethylallyl diphosphate contacts are provided by H41 and H74. Residues H41 and H74 each contribute to the isopentenyl diphosphate site. C96 lines the [4Fe-4S] cluster pocket. H124 contributes to the (2E)-4-hydroxy-3-methylbut-2-enyl diphosphate binding site. H124 is a dimethylallyl diphosphate binding site. H124 is an isopentenyl diphosphate binding site. The Proton donor role is filled by E126. T167 serves as a coordination point for (2E)-4-hydroxy-3-methylbut-2-enyl diphosphate. Residue C197 participates in [4Fe-4S] cluster binding. Positions 225, 226, 227, and 269 each coordinate (2E)-4-hydroxy-3-methylbut-2-enyl diphosphate. 4 residues coordinate dimethylallyl diphosphate: S225, S226, N227, and S269. 4 residues coordinate isopentenyl diphosphate: S225, S226, N227, and S269.

Belongs to the IspH family. [4Fe-4S] cluster serves as cofactor.

It catalyses the reaction isopentenyl diphosphate + 2 oxidized [2Fe-2S]-[ferredoxin] + H2O = (2E)-4-hydroxy-3-methylbut-2-enyl diphosphate + 2 reduced [2Fe-2S]-[ferredoxin] + 2 H(+). The catalysed reaction is dimethylallyl diphosphate + 2 oxidized [2Fe-2S]-[ferredoxin] + H2O = (2E)-4-hydroxy-3-methylbut-2-enyl diphosphate + 2 reduced [2Fe-2S]-[ferredoxin] + 2 H(+). It participates in isoprenoid biosynthesis; dimethylallyl diphosphate biosynthesis; dimethylallyl diphosphate from (2E)-4-hydroxy-3-methylbutenyl diphosphate: step 1/1. Its pathway is isoprenoid biosynthesis; isopentenyl diphosphate biosynthesis via DXP pathway; isopentenyl diphosphate from 1-deoxy-D-xylulose 5-phosphate: step 6/6. Its function is as follows. Catalyzes the conversion of 1-hydroxy-2-methyl-2-(E)-butenyl 4-diphosphate (HMBPP) into a mixture of isopentenyl diphosphate (IPP) and dimethylallyl diphosphate (DMAPP). Acts in the terminal step of the DOXP/MEP pathway for isoprenoid precursor biosynthesis. In Shewanella halifaxensis (strain HAW-EB4), this protein is 4-hydroxy-3-methylbut-2-enyl diphosphate reductase.